The following is a 1538-amino-acid chain: CLIP-associating protein 1 (1538 aa).

HEAT repeat units lie at residues 87–124 (AQIG…QAAN) and 163–200 (LTLS…HVGE). A disordered region spans residues 235–292 (SANDKNFDDEDSVDGNRPSSASSTSSKAPPSSRRNVGMGTTRRLGSSTLGSKSSAAKE). Residue serine 246 is modified to Phosphoserine. Residues 251-268 (RPSSASSTSSKAPPSSRR) are compositionally biased toward low complexity. 2 HEAT repeats span residues 405 to 440 (HGAE…IRHT) and 441 to 477 (HIPR…EWQT). The interval 543 to 783 (SDSIVSLPQS…DRFGLGQPGR (241 aa)) is disordered. Serine 545, serine 548, serine 558, serine 559, and serine 568 each carry phosphoserine. The segment covering 548–567 (SLPQSDRSSSSSQESLNRPL) has biased composition (low complexity). A compositionally biased stretch (low complexity) spans 574–594 (TGSTTSRASTVSTKSVSTTGS). Phosphoserine is present on serine 600. Residues 606–628 (AAASAKSKVSSSSGTTPFSSAAA) show a composition bias toward low complexity. Residues serine 636, serine 646, serine 647, and serine 649 each carry the phosphoserine modification. The span at 645 to 658 (QSSGSATNVASTPD) shows a compositional bias: polar residues. The residue at position 656 (threonine 656) is a Phosphothreonine. Residues 662-785 (RSRAKVVSQS…FGLGQPGRIP (124 aa)) form an interaction with microtubules, MAPRE1 and MAPRE3 region. Low complexity predominate over residues 673–692 (RSRSANPAGAGSRSSSPGKL). Residues serine 684, serine 688, serine 695, and serine 705 each carry the phosphoserine modification. The segment covering 693–705 (LGSGYGGLTGGSS) has biased composition (gly residues). Threonine 711 carries the phosphothreonine modification. The residue at position 714 (serine 714) is a Phosphoserine. The span at 724–733 (QGCSRETSPN) shows a compositional bias: polar residues. Residues serine 787, serine 797, and serine 823 each carry the phosphoserine modification. Residues 974–1011 (QQFNILMRFIVDQTQTPNLKVKVAILKYIESLARQMDP) form an HEAT 5 repeat. Disordered stretches follow at residues 1080–1120 (HLKN…CSHG) and 1136–1156 (AKHP…SHKA). Residues 1082 to 1097 (KNSSNTSVGSPSNTIG) are compositionally biased toward polar residues. Phosphoserine is present on serine 1091. Residues threonine 1095 and threonine 1099 each carry the phosphothreonine modification. A compositionally biased stretch (low complexity) spans 1106 to 1115 (SRTSPLTSPT). Serine 1113 carries the phosphoserine modification. Residues serine 1196 and serine 1223 each carry the phosphoserine modification. Positions 1215-1238 (VSRDGGAASPATEGRGGSEVEGGR) are disordered. The interaction with CLIP2 stretch occupies residues 1254–1538 (RAFPGPRARD…SSSSDVSTHS (285 aa)). Positions 1254-1538 (RAFPGPRARD…SSSSDVSTHS (285 aa)) are interaction with PHLDB2 and RSN. Positions 1256–1538 (FPGPRARDYN…SSSSDVSTHS (283 aa)) are localization to kinetochores. Residues 1299-1330 (DHSDLVADLLKELSNHNERVEERKGALLELLK) are a coiled coil. HEAT repeat units follow at residues 1342-1379 (EHFK…NQPA) and 1460-1497 (QLLV…VIGE).

Belongs to the CLASP family. In terms of assembly, interacts with CLIP2, ERC1, MAPRE1, MAPRE3, microtubules, PHLDB2 and RSN. The interaction with ERC1 may be mediated by PHLDB2. Interacts with GCC2; recruits CLASP1 to Golgi membranes. Interacts with MACF1. Interacts with mtcl2 and MTCL1.

It is found in the cytoplasm. The protein localises to the cytoskeleton. It localises to the microtubule organizing center. Its subcellular location is the centrosome. The protein resides in the chromosome. It is found in the centromere. The protein localises to the kinetochore. It localises to the spindle. Its subcellular location is the golgi apparatus. The protein resides in the trans-Golgi network. Functionally, microtubule plus-end tracking protein that promotes the stabilization of dynamic microtubules. Involved in the nucleation of noncentrosomal microtubules originating from the trans-Golgi network (TGN). Required for the polarization of the cytoplasmic microtubule arrays in migrating cells towards the leading edge of the cell. May act at the cell cortex to enhance the frequency of rescue of depolymerizing microtubules by attaching their plus-ends to cortical platforms composed of ERC1 and PHLDB2. This cortical microtubule stabilizing activity is regulated at least in part by phosphatidylinositol 3-kinase signaling. Also performs a similar stabilizing function at the kinetochore which is essential for the bipolar alignment of chromosomes on the mitotic spindle. This chain is CLIP-associating protein 1 (CLASP1), found in Homo sapiens (Human).